The following is a 380-amino-acid chain: Lipid-A-disaccharide synthase (380 aa).

The protein belongs to the LpxB family.

The catalysed reaction is a lipid X + a UDP-2-N,3-O-bis[(3R)-3-hydroxyacyl]-alpha-D-glucosamine = a lipid A disaccharide + UDP + H(+). The protein operates within bacterial outer membrane biogenesis; LPS lipid A biosynthesis. Condensation of UDP-2,3-diacylglucosamine and 2,3-diacylglucosamine-1-phosphate to form lipid A disaccharide, a precursor of lipid A, a phosphorylated glycolipid that anchors the lipopolysaccharide to the outer membrane of the cell. The protein is Lipid-A-disaccharide synthase of Francisella tularensis subsp. novicida (strain U112).